We begin with the raw amino-acid sequence, 621 residues long: UvrABC system protein C (621 aa).

One can recognise a GIY-YIG domain in the interval M20–V98. In terms of domain architecture, UVR spans D207–M242.

Belongs to the UvrC family. Interacts with UvrB in an incision complex.

The protein resides in the cytoplasm. In terms of biological role, the UvrABC repair system catalyzes the recognition and processing of DNA lesions. UvrC both incises the 5' and 3' sides of the lesion. The N-terminal half is responsible for the 3' incision and the C-terminal half is responsible for the 5' incision. The sequence is that of UvrABC system protein C from Xylella fastidiosa (strain 9a5c).